A 619-amino-acid chain; its full sequence is MSPYPHLERIGSPADLRATERRELAQVASELRAFLIESVSKTGGHLSSNLGTVELTIALHYVFNTPDDRIVWDVGHQTYGHKILTGRREAMSGLRHWGGISGFPRRCESEYDTFGTAHSSTSISAALGMAVAARDRGEDRRAIAVIGDGAMSAGMAFEALNNAGDMDANLLVILNDNEMSISPPVGALTKILARLMSGSTYNAARRVGEKVLGTVPPMAELARKVEEYAKGMIAPGTLFEEFGFHYYGPIDGHDLDALIPTLQNIRKLKGPQFLHVITKKGQGYKLAEADPILYHGVSKFDHTAGIQTGKSGGKLTYTQVFSDWLCDIAAADPRIVGITPAMREGSGLVEFAQRFPDRYYDVGIAEQHALTFAAGLACEGLKPVVAIYSTFLQRAYDQLIHDIALQNLPVVLAIDRGGLVGADGATHHGAFDLSFLACVPNLVVMAPADENECRQMLYTAVCHDGPTAVRYPRGGGSGVVPLEPMTALPIGKGEIRRHGTRIAVLAFGSMLGVALEVGEALDASVANMRFVKPLDEALIAELAANHALLVTVEENAVIGGAGSEVARFVDTLPQRPRVLRLGLPDRFIDHGDQAQLLASVGLDKTGILAAIEAVYPHNS.

Residues histidine 76 and 117–119 (AHS) each bind thiamine diphosphate. Aspartate 148 serves as a coordination point for Mg(2+). Residues 149-150 (GA), asparagine 177, tyrosine 284, and glutamate 366 each bind thiamine diphosphate. Asparagine 177 contributes to the Mg(2+) binding site.

This sequence belongs to the transketolase family. DXPS subfamily. In terms of assembly, homodimer. Requires Mg(2+) as cofactor. It depends on thiamine diphosphate as a cofactor.

It catalyses the reaction D-glyceraldehyde 3-phosphate + pyruvate + H(+) = 1-deoxy-D-xylulose 5-phosphate + CO2. The protein operates within metabolic intermediate biosynthesis; 1-deoxy-D-xylulose 5-phosphate biosynthesis; 1-deoxy-D-xylulose 5-phosphate from D-glyceraldehyde 3-phosphate and pyruvate: step 1/1. Functionally, catalyzes the acyloin condensation reaction between C atoms 2 and 3 of pyruvate and glyceraldehyde 3-phosphate to yield 1-deoxy-D-xylulose-5-phosphate (DXP). This is 1-deoxy-D-xylulose-5-phosphate synthase from Azoarcus sp. (strain BH72).